We begin with the raw amino-acid sequence, 223 residues long: MQLERLQKKLGYQFTNLDYLLQALTHRSAGAKNNERLEFLGDSILNFAIGKALFEKFPKANEGELSRMRATLVREQTLAILARKFGLGEYMKLGAGELKSGGYRRESILSDCVEAIIAAIYLDAGMDKAIAQVHLWYQDLLAEMKPGDAQKDPKTRLQEFLQGRKLPLPTYEVLNIKGEAHNQTFKVTCKIEMLEEIFIGIGTSRRKAEQNAAEQVLAKLTTK.

The RNase III domain maps to 3-125 (LERLQKKLGY…IIAAIYLDAG (123 aa)). Glu-38 is a binding site for Mg(2+). Asp-42 is an active-site residue. Positions 111 and 114 each coordinate Mg(2+). Glu-114 is an active-site residue. The DRBM domain maps to 152 to 222 (DPKTRLQEFL…AEQVLAKLTT (71 aa)).

It belongs to the ribonuclease III family. As to quaternary structure, homodimer. Requires Mg(2+) as cofactor.

Its subcellular location is the cytoplasm. The enzyme catalyses Endonucleolytic cleavage to 5'-phosphomonoester.. Digests double-stranded RNA. Involved in the processing of primary rRNA transcript to yield the immediate precursors to the large and small rRNAs (23S and 16S). Processes some mRNAs, and tRNAs when they are encoded in the rRNA operon. Processes pre-crRNA and tracrRNA of type II CRISPR loci if present in the organism. This chain is Ribonuclease 3, found in Actinobacillus pleuropneumoniae serotype 3 (strain JL03).